The chain runs to 165 residues: Phosphopantetheine adenylyltransferase (165 aa).

Ser-10 contacts substrate. ATP-binding positions include 10–11 and His-18; that span reads SF. Residues Lys-42, Thr-79, and Arg-93 each contribute to the substrate site. ATP-binding positions include 94–96, Glu-104, and 129–135; these read GLR and VRPITAT.

Belongs to the bacterial CoaD family. In terms of assembly, homohexamer. It depends on Mg(2+) as a cofactor.

It is found in the cytoplasm. It catalyses the reaction (R)-4'-phosphopantetheine + ATP + H(+) = 3'-dephospho-CoA + diphosphate. The protein operates within cofactor biosynthesis; coenzyme A biosynthesis; CoA from (R)-pantothenate: step 4/5. Functionally, reversibly transfers an adenylyl group from ATP to 4'-phosphopantetheine, yielding dephospho-CoA (dPCoA) and pyrophosphate. The polypeptide is Phosphopantetheine adenylyltransferase (Rhodopseudomonas palustris (strain BisA53)).